We begin with the raw amino-acid sequence, 650 residues long: DNA topoisomerase 3 (650 aa).

In terms of domain architecture, Toprim spans 1 to 134; the sequence is MRLFIAEKPS…KLNQIQRCLI (134 aa). The Mg(2+) site is built by glutamate 7, aspartate 103, and aspartate 105. In terms of domain architecture, Topo IA-type catalytic spans 155–617; the sequence is FIPLATSALA…TLTNFLPELM (463 aa). Residues 194-199 are interaction with DNA; it reads SVGRVQ. The active-site O-(5'-phospho-DNA)-tyrosine intermediate is the tyrosine 342.

The protein belongs to the type IA topoisomerase family. Mg(2+) is required as a cofactor.

The catalysed reaction is ATP-independent breakage of single-stranded DNA, followed by passage and rejoining.. Its function is as follows. Releases the supercoiling and torsional tension of DNA, which is introduced during the DNA replication and transcription, by transiently cleaving and rejoining one strand of the DNA duplex. Introduces a single-strand break via transesterification at a target site in duplex DNA. The scissile phosphodiester is attacked by the catalytic tyrosine of the enzyme, resulting in the formation of a DNA-(5'-phosphotyrosyl)-enzyme intermediate and the expulsion of a 3'-OH DNA strand. The free DNA strand then undergoes passage around the unbroken strand, thus removing DNA supercoils. Finally, in the religation step, the DNA 3'-OH attacks the covalent intermediate to expel the active-site tyrosine and restore the DNA phosphodiester backbone. The protein is DNA topoisomerase 3 of Pasteurella multocida (strain Pm70).